A 371-amino-acid polypeptide reads, in one-letter code: Chaperone protein DnaJ (371 aa).

One can recognise a J domain in the interval 5–70; the sequence is DYYEVLGVNR…QKRAAYDQYG (66 aa). Residues 31-52 are disordered; that stretch reads KYHPDRNPDNPKAEESFKEAKE. Residues 32 to 52 are compositionally biased toward basic and acidic residues; that stretch reads YHPDRNPDNPKAEESFKEAKE. The segment at 132–210 adopts a CR-type zinc-finger fold; sequence RTETKIRIPV…CQGAGRVKKH (79 aa). Zn(2+)-binding residues include C145, C148, C162, C165, C184, C187, C198, and C201. CXXCXGXG motif repeat units lie at residues 145–152, 162–169, 184–191, and 198–205; these read CETCHGSG, CTTCGGHG, CPKCHGSG, and CPSCQGAG.

It belongs to the DnaJ family. As to quaternary structure, homodimer. Requires Zn(2+) as cofactor.

The protein resides in the cytoplasm. Participates actively in the response to hyperosmotic and heat shock by preventing the aggregation of stress-denatured proteins and by disaggregating proteins, also in an autonomous, DnaK-independent fashion. Unfolded proteins bind initially to DnaJ; upon interaction with the DnaJ-bound protein, DnaK hydrolyzes its bound ATP, resulting in the formation of a stable complex. GrpE releases ADP from DnaK; ATP binding to DnaK triggers the release of the substrate protein, thus completing the reaction cycle. Several rounds of ATP-dependent interactions between DnaJ, DnaK and GrpE are required for fully efficient folding. Also involved, together with DnaK and GrpE, in the DNA replication of plasmids through activation of initiation proteins. This chain is Chaperone protein DnaJ, found in Methylovorus sp. (strain SS1 / DSM 11726).